A 1564-amino-acid polypeptide reads, in one-letter code: Superkiller complex protein 3 (1564 aa).

At serine 2 the chain carries N-acetylserine. TPR repeat units follow at residues 6–39 (VKTA…EKNN), 40–73 (YNAW…EPDQ), 272–305 (GPGL…SPVC), 307–339 (SGWY…VDNL), 386–419 (PGLL…YPDL), 420–453 (AEVH…DTEV), 455–492 (EYHY…DTYM), 493–527 (GKVF…DDTD), 564–597 (KWAW…DPKD), 598–631 (FNCW…NPES), 633–665 (YSVF…KEDY), 679–713 (MAKA…RADV), 790–824 (AQHL…DSNN), 826–860 (LYWN…EQIN), 861–894 (AVAW…DPSY), 980–1013 (APAF…LQTA), 1020–1054 (NVAI…LEDI), 1056–1084 (GFAL…VESE), 1326–1359 (KWSL…NPDQ), and 1400–1433 (VPAW…ASQR).

This sequence belongs to the SKI3 family. Component of the SKI complex which consists of SKIC2, SKIC3 and SKIC8. Interacts with PAF1. In terms of tissue distribution, widely expressed with the highest levels observed in vascular tissues, lymph node, pituitary, lung and intestine. Not expressed in the liver.

It localises to the cytoplasm. Its subcellular location is the nucleus. In terms of biological role, component of the SKI complex, a multiprotein complex that assists the RNA-degrading exosome during the mRNA decay and quality-control pathways. The SKI complex catalyzes mRNA extraction from 80S ribosomal complexes in the 3'-5' direction and channels mRNA to the cytosolic exosome for degradation. SKI-mediated extraction of mRNA from stalled ribosomes allow binding of the Pelota-HBS1L complex and subsequent ribosome disassembly by ABCE1 for ribosome recycling. In the nucleus, the SKI complex associates with transcriptionally active genes in a manner dependent on PAF1 complex (PAF1C). The sequence is that of Superkiller complex protein 3 from Homo sapiens (Human).